The primary structure comprises 126 residues: Glycine cleavage system H protein (126 aa).

Residues 22 to 104 (TVTIGITEYA…YEKAWMVKVK (83 aa)) form the Lipoyl-binding domain. An N6-lipoyllysine modification is found at Lys63.

This sequence belongs to the GcvH family. In terms of assembly, the glycine cleavage system is composed of four proteins: P, T, L and H. (R)-lipoate is required as a cofactor.

In terms of biological role, the glycine cleavage system catalyzes the degradation of glycine. The H protein shuttles the methylamine group of glycine from the P protein to the T protein. Its function is as follows. Is also involved in protein lipoylation via its role as an octanoyl/lipoyl carrier protein intermediate. The protein is Glycine cleavage system H protein of Staphylococcus carnosus (strain TM300).